We begin with the raw amino-acid sequence, 444 residues long: MAAPTYYTITFGCQMNRADTERMAGILESLGYVATEDELQADLVLYNTCTIRDNAEQKVYSYLGIQAQRKRKNPAIKLIVAGCVAQQEGEKLLRRVPELDLVMGPQYVNRLGDLLAQVEAGNQVVATDPVEIPEDITKPRRDSQVTAWINVIYGCNERCTYCIVPRVRGQEQSRQPQAIRAEIEDVARAGYREVTLLGQNIDAYGRDLDPKTNLASLLRFVHSVEGIERIRFATSHPRYFTEELITTCAELPKVCEHFHIPFQAGSNEVLKRMRRGYTHERYRQIIQLIRQYMPEAAISADAIVGFPGETEAQFQETLQLVQDIGFDQVNTAAYSPRPGTPAAEWPDQVPEEEKSDRLQRLNRLVAEVAAARSARLLGQVQEVLVEGPNPKNPRQAMGRTRGNRLVFFEGDPEELQGSLVPVRITATRAFSLTGEAVTVRASGP.

Residues 4-120 (PTYYTITFGC…LGDLLAQVEA (117 aa)) form the MTTase N-terminal domain. [4Fe-4S] cluster-binding residues include cysteine 13, cysteine 49, cysteine 83, cysteine 155, cysteine 159, and cysteine 162. The region spanning 141–372 (RDSQVTAWIN…RLVAEVAAAR (232 aa)) is the Radical SAM core domain. The 65-residue stretch at 374–438 (ARLLGQVQEV…AFSLTGEAVT (65 aa)) folds into the TRAM domain.

The protein belongs to the methylthiotransferase family. MiaB subfamily. In terms of assembly, monomer. [4Fe-4S] cluster is required as a cofactor.

It localises to the cytoplasm. The catalysed reaction is N(6)-dimethylallyladenosine(37) in tRNA + (sulfur carrier)-SH + AH2 + 2 S-adenosyl-L-methionine = 2-methylsulfanyl-N(6)-dimethylallyladenosine(37) in tRNA + (sulfur carrier)-H + 5'-deoxyadenosine + L-methionine + A + S-adenosyl-L-homocysteine + 2 H(+). Functionally, catalyzes the methylthiolation of N6-(dimethylallyl)adenosine (i(6)A), leading to the formation of 2-methylthio-N6-(dimethylallyl)adenosine (ms(2)i(6)A) at position 37 in tRNAs that read codons beginning with uridine. The sequence is that of tRNA-2-methylthio-N(6)-dimethylallyladenosine synthase from Synechococcus sp. (strain JA-2-3B'a(2-13)) (Cyanobacteria bacterium Yellowstone B-Prime).